The following is a 511-amino-acid chain: Maturase K (511 aa).

It belongs to the intron maturase 2 family. MatK subfamily.

The protein resides in the plastid. It localises to the chloroplast. In terms of biological role, usually encoded in the trnK tRNA gene intron. Probably assists in splicing its own and other chloroplast group II introns. This Poa pratensis (Kentucky bluegrass) protein is Maturase K.